The chain runs to 389 residues: Phospho-N-acetylmuramoyl-pentapeptide-transferase (389 aa).

The next 10 helical transmembrane spans lie at 25–45 (RAVMATITALGIGLVCGPWVI), 73–93 (TMGGVLILIGIAVATLLWGDL), 97–117 (FIWIVMLVTFGFGVIGWVDDY), 135–155 (FWQSVIGLFAAVYLAFSVSEA), 190–210 (ISYPLGVWGFIVLTYFVIVGA), 222–242 (GLVIMPVVLVGASLGVFAYVM), 258–278 (GAGELLIFCSAMGGAGLAFLW), 286–306 (VFMGDVGALALGGALGTVAVI), 311–331 (IVLFIMGGIFVAETLSVMLQV), and 366–386 (QVVVRFWIITLMLCLFGLSTL).

This sequence belongs to the glycosyltransferase 4 family. MraY subfamily. Requires Mg(2+) as cofactor.

Its subcellular location is the cell inner membrane. The catalysed reaction is UDP-N-acetyl-alpha-D-muramoyl-L-alanyl-gamma-D-glutamyl-meso-2,6-diaminopimeloyl-D-alanyl-D-alanine + di-trans,octa-cis-undecaprenyl phosphate = di-trans,octa-cis-undecaprenyl diphospho-N-acetyl-alpha-D-muramoyl-L-alanyl-D-glutamyl-meso-2,6-diaminopimeloyl-D-alanyl-D-alanine + UMP. It functions in the pathway cell wall biogenesis; peptidoglycan biosynthesis. In terms of biological role, catalyzes the initial step of the lipid cycle reactions in the biosynthesis of the cell wall peptidoglycan: transfers peptidoglycan precursor phospho-MurNAc-pentapeptide from UDP-MurNAc-pentapeptide onto the lipid carrier undecaprenyl phosphate, yielding undecaprenyl-pyrophosphoryl-MurNAc-pentapeptide, known as lipid I. This is Phospho-N-acetylmuramoyl-pentapeptide-transferase from Burkholderia vietnamiensis (strain G4 / LMG 22486) (Burkholderia cepacia (strain R1808)).